The following is a 92-amino-acid chain: Large ribosomal subunit protein eL31 (92 aa).

An N-acetylserine modification is found at S2.

It belongs to the eukaryotic ribosomal protein eL31 family. In terms of assembly, part of the 50S ribosomal subunit.

Its function is as follows. Binds to the 23S rRNA. Located at the polypeptide exit tunnel on the outside of the subunit. The sequence is that of Large ribosomal subunit protein eL31 (rpl31e) from Haloarcula marismortui (strain ATCC 43049 / DSM 3752 / JCM 8966 / VKM B-1809) (Halobacterium marismortui).